Here is a 161-residue protein sequence, read N- to C-terminus: MAKVLKKPDLTNPALRAKLKKGMGHNYYGEPAWPNDLLYIFPVVIMGTIALVIGLAVMDPAMVGEPADPFATPLEILPEWYLYPTFQIFRVVPNKLLGVLMNASIPLGLMLIPFIESVNKFQNPFRRPVAMTVFLFGTLVTLWLGIGAAFPLDKSLTLGLF.

The next 3 membrane-spanning stretches (helical) occupy residues leucine 37–valine 57, leucine 96–glutamate 116, and alanine 130–phenylalanine 150.

It belongs to the cytochrome b family. PetD subfamily. As to quaternary structure, the 4 large subunits of the cytochrome b6-f complex are cytochrome b6, subunit IV (17 kDa polypeptide, PetD), cytochrome f and the Rieske protein, while the 4 small subunits are PetG, PetL, PetM and PetN. The complex functions as a dimer.

The protein resides in the cellular thylakoid membrane. In terms of biological role, component of the cytochrome b6-f complex, which mediates electron transfer between photosystem II (PSII) and photosystem I (PSI), cyclic electron flow around PSI, and state transitions. In Synechococcus elongatus, this protein is Cytochrome b6-f complex subunit 4.